Here is a 425-residue protein sequence, read N- to C-terminus: Protein disulfide isomerase-like 5-3 (425 aa).

An N-terminal signal peptide occupies residues 1 to 28; the sequence is MGKPTLPPVVVVVVLLLLVVVLPATTCG. The region spanning 29-153 is the Thioredoxin domain; the sequence is ADAGGGGEAE…LVENLKKLVA (125 aa). Catalysis depends on nucleophile residues Cys-75 and Cys-78. An intrachain disulfide couples Cys-75 to Cys-78. The chain crosses the membrane as a helical span at residues 386-406; that stretch reads LLGVNAVYILVFLVAVLVLLM.

This sequence belongs to the protein disulfide isomerase family.

It is found in the membrane. Functionally, acts as a protein-folding catalyst that interacts with nascent polypeptides to catalyze the formation, isomerization, and reduction or oxidation of disulfide bonds. May play a role in storage protein biogenesis. In Oryza sativa subsp. japonica (Rice), this protein is Protein disulfide isomerase-like 5-3 (PDIL5-3).